We begin with the raw amino-acid sequence, 129 residues long: Small ribosomal subunit protein uS11 (129 aa).

It belongs to the universal ribosomal protein uS11 family. In terms of assembly, part of the 30S ribosomal subunit. Interacts with proteins S7 and S18. Binds to IF-3.

Functionally, located on the platform of the 30S subunit, it bridges several disparate RNA helices of the 16S rRNA. Forms part of the Shine-Dalgarno cleft in the 70S ribosome. The protein is Small ribosomal subunit protein uS11 of Haemophilus ducreyi (strain 35000HP / ATCC 700724).